The sequence spans 233 residues: MQNQKNQKSLVAKVLVLFAAVALMFVGVQVFADDKLDLNTLECKDALELTAADAADAEKVVKQWKVQNTSLNAKVTKDSVKVAVADNKVTVTPADGDAGKALSGSKILNLVGVCELNKLTLGTEKKLTLTVKDGKVDAEAGLKALKEAGAKVPATVNKDDVTFTVGKDDNANKVTVKAVDGKTTVSGQVVFEFTVAKTPWYKTVWFLTLVAVVVVAAVAGGVFFFVKKNKKNK.

A signal peptide spans 1-32 (MQNQKNQKSLVAKVLVLFAAVALMFVGVQVFA). A helical transmembrane segment spans residues 206 to 226 (FLTLVAVVVVAAVAGGVFFFV).

Its subcellular location is the cell membrane. This Onion yellows phytoplasma (strain OY-M) protein is Antigenic membrane protein (amp).